The primary structure comprises 289 residues: G1/S-specific cyclin-D2 (289 aa).

The Cyclin N-terminal domain occupies 26-151; sequence VLQNLLTIEE…VVLGKLKWNL (126 aa). A disordered region spans residues 264-289; it reads DQRDGSKSEDELDQASTPTDVRDIDL. Serine 271 bears the Phosphoserine mark. Threonine 280 carries the phosphothreonine modification.

This sequence belongs to the cyclin family. Cyclin D subfamily. Interacts with either CDK4 or CDK6 protein kinase to form a serine/threonine kinase holoenzyme complex. The cyclin subunit imparts substrate specificity to the complex. Post-translationally, phosphorylation at Thr-280 by MAP kinases is required for ubiquitination and degradation by the DCX(AMBRA1) complex. Ubiquitinated by the DCX(AMBRA1) complex during the transition from G1 to S cell phase, leading to its degradation: ubiquitination is dependent on Thr-280 phosphorylation. The DCX(AMBRA1) complex represents the major regulator of CCND2 stability during the G1/S transition. Polyubiquitinated by the SCF(FBXL2) complex, leading to proteasomal degradation.

The protein localises to the nucleus. The protein resides in the cytoplasm. Its subcellular location is the nucleus membrane. In terms of biological role, regulatory component of the cyclin D2-CDK4 (DC) complex that phosphorylates and inhibits members of the retinoblastoma (RB) protein family including RB1 and regulates the cell-cycle during G(1)/S transition. Phosphorylation of RB1 allows dissociation of the transcription factor E2F from the RB/E2F complex and the subsequent transcription of E2F target genes which are responsible for the progression through the G(1) phase. Hypophosphorylates RB1 in early G(1) phase. Cyclin D-CDK4 complexes are major integrators of various mitogenenic and antimitogenic signals. The polypeptide is G1/S-specific cyclin-D2 (Homo sapiens (Human)).